We begin with the raw amino-acid sequence, 1377 residues long: DNA-directed RNA polymerase subunit beta' (1377 aa).

Zn(2+)-binding residues include C60, C62, C75, and C78. Residues D449, D451, and D453 each contribute to the Mg(2+) site. Zn(2+)-binding residues include C777, C851, C858, and C861.

Belongs to the RNA polymerase beta' chain family. In terms of assembly, the RNAP catalytic core consists of 2 alpha, 1 beta, 1 beta' and 1 omega subunit. When a sigma factor is associated with the core the holoenzyme is formed, which can initiate transcription. Mg(2+) is required as a cofactor. The cofactor is Zn(2+).

It catalyses the reaction RNA(n) + a ribonucleoside 5'-triphosphate = RNA(n+1) + diphosphate. In terms of biological role, DNA-dependent RNA polymerase catalyzes the transcription of DNA into RNA using the four ribonucleoside triphosphates as substrates. This Borreliella afzelii (strain PKo) (Borrelia afzelii) protein is DNA-directed RNA polymerase subunit beta'.